The primary structure comprises 521 residues: Solute carrier family 35 member F4 (521 aa).

10 consecutive transmembrane segments (helical) span residues 160 to 180, 192 to 212, 248 to 266, 277 to 297, 301 to 321, 330 to 350, 365 to 385, 395 to 417, 419 to 441, and 450 to 470; these read MVLK…SWVG, FYCP…FFPV, FLKR…NYLY, DVSA…WIVL, FMGV…MMAY, IIGV…KVLF, FVST…VILY, FAAL…NILV, VGVV…PGNA, and VIFN…FLLM. Residues 261-321 enclose the EamA domain; it reads LTNYLYLLAL…AITGIVMMAY (61 aa).

The protein belongs to the SLC35F solute transporter family.

The protein localises to the membrane. Putative solute transporter. This is Solute carrier family 35 member F4 (SLC35F4) from Homo sapiens (Human).